We begin with the raw amino-acid sequence, 160 residues long: Putative control protein C.MjaVP (160 aa).

Its function is as follows. May be involved in control of expression of the type II restriction enzyme MjaV and/or its methyltransferase M.MjaV. In Methanocaldococcus jannaschii (strain ATCC 43067 / DSM 2661 / JAL-1 / JCM 10045 / NBRC 100440) (Methanococcus jannaschii), this protein is Putative control protein C.MjaVP.